The sequence spans 253 residues: Phosphoribosylaminoimidazole-succinocarboxamide synthase (253 aa).

It belongs to the SAICAR synthetase family.

It catalyses the reaction 5-amino-1-(5-phospho-D-ribosyl)imidazole-4-carboxylate + L-aspartate + ATP = (2S)-2-[5-amino-1-(5-phospho-beta-D-ribosyl)imidazole-4-carboxamido]succinate + ADP + phosphate + 2 H(+). It participates in purine metabolism; IMP biosynthesis via de novo pathway; 5-amino-1-(5-phospho-D-ribosyl)imidazole-4-carboxamide from 5-amino-1-(5-phospho-D-ribosyl)imidazole-4-carboxylate: step 1/2. In Roseobacter denitrificans (strain ATCC 33942 / OCh 114) (Erythrobacter sp. (strain OCh 114)), this protein is Phosphoribosylaminoimidazole-succinocarboxamide synthase.